A 430-amino-acid chain; its full sequence is KICSTOR complex protein kaptin (430 aa).

Residues 410–430 form a disordered region; sequence RKHQQGLGDRVGPRPVEHPAS. Basic and acidic residues predominate over residues 420-430; it reads VGPRPVEHPAS.

As to quaternary structure, part of the KICSTOR complex composed of KPTN, ITFG2, KICS2 and SZT2. SZT2 probably serves as a link between the other three proteins in the KICSTOR complex and mediates the direct interaction with the GATOR1 complex. May associate with F-actin filaments.

It localises to the lysosome membrane. The protein localises to the cell projection. The protein resides in the lamellipodium. Its subcellular location is the stereocilium. In terms of biological role, as part of the KICSTOR complex functions in the amino acid-sensing branch of the TORC1 signaling pathway. Recruits, in an amino acid-independent manner, the GATOR1 complex to the lysosomal membranes and allows its interaction with GATOR2 and the RAG GTPases. Functions upstream of the RAG GTPases and is required to negatively regulate mTORC1 signaling in absence of amino acids. In absence of the KICSTOR complex mTORC1 is constitutively localized to the lysosome and activated. The KICSTOR complex is also probably involved in the regulation of mTORC1 by glucose. The protein is KICSTOR complex protein kaptin of Mus musculus (Mouse).